We begin with the raw amino-acid sequence, 159 residues long: Phosphopantetheine adenylyltransferase (159 aa).

Substrate is bound at residue T10. ATP-binding positions include T10 to F11 and H18. The substrate site is built by K42, M74, and R88. ATP is bound by residues G89 to R91, E99, and W124 to S130.

Belongs to the bacterial CoaD family. Homohexamer. Requires Mg(2+) as cofactor.

Its subcellular location is the cytoplasm. The catalysed reaction is (R)-4'-phosphopantetheine + ATP + H(+) = 3'-dephospho-CoA + diphosphate. The protein operates within cofactor biosynthesis; coenzyme A biosynthesis; CoA from (R)-pantothenate: step 4/5. Its function is as follows. Reversibly transfers an adenylyl group from ATP to 4'-phosphopantetheine, yielding dephospho-CoA (dPCoA) and pyrophosphate. The chain is Phosphopantetheine adenylyltransferase from Salmonella choleraesuis (strain SC-B67).